The chain runs to 301 residues: ATP synthase subunit gamma, mitochondrial (301 aa).

This sequence belongs to the ATPase gamma chain family. F-type ATPases have 2 components, CF(1) - the catalytic core - and CF(0) - the membrane proton channel. CF(1) has five subunits: alpha(3), beta(3), gamma(1), delta(1), epsilon(1). CF(0) has three main subunits: a, b and c.

The protein localises to the mitochondrion. It is found in the mitochondrion inner membrane. Its function is as follows. Mitochondrial membrane ATP synthase (F(1)F(0) ATP synthase or Complex V) produces ATP from ADP in the presence of a proton gradient across the membrane which is generated by electron transport complexes of the respiratory chain. F-type ATPases consist of two structural domains, F(1) - containing the extramembraneous catalytic core, and F(0) - containing the membrane proton channel, linked together by a central stalk and a peripheral stalk. During catalysis, ATP synthesis in the catalytic domain of F(1) is coupled via a rotary mechanism of the central stalk subunits to proton translocation. Part of the complex F(1) domain and the central stalk which is part of the complex rotary element. The gamma subunit protrudes into the catalytic domain formed of alpha(3)beta(3). Rotation of the central stalk against the surrounding alpha(3)beta(3) subunits leads to hydrolysis of ATP in three separate catalytic sites on the beta subunits. The chain is ATP synthase subunit gamma, mitochondrial (atp3) from Schizosaccharomyces pombe (strain 972 / ATCC 24843) (Fission yeast).